Here is a 211-residue protein sequence, read N- to C-terminus: Probable superoxide dismutase [Mn], mitochondrial (211 aa).

Mn(2+) contacts are provided by H36, H84, D173, and H177.

The protein belongs to the iron/manganese superoxide dismutase family. Homotetramer. The cofactor is Mn(2+).

It is found in the mitochondrion matrix. The enzyme catalyses 2 superoxide + 2 H(+) = H2O2 + O2. Functionally, destroys superoxide anion radicals which are normally produced within the cells and which are toxic to biological systems. The sequence is that of Probable superoxide dismutase [Mn], mitochondrial from Debaryomyces hansenii (strain ATCC 36239 / CBS 767 / BCRC 21394 / JCM 1990 / NBRC 0083 / IGC 2968) (Yeast).